A 223-amino-acid chain; its full sequence is Deoxyribose-phosphate aldolase (223 aa).

Catalysis depends on Asp-91, which acts as the Proton donor/acceptor. The active-site Schiff-base intermediate with acetaldehyde is the Lys-153. The Proton donor/acceptor role is filled by Lys-182.

The protein belongs to the DeoC/FbaB aldolase family. DeoC type 1 subfamily.

Its subcellular location is the cytoplasm. It catalyses the reaction 2-deoxy-D-ribose 5-phosphate = D-glyceraldehyde 3-phosphate + acetaldehyde. The protein operates within carbohydrate degradation; 2-deoxy-D-ribose 1-phosphate degradation; D-glyceraldehyde 3-phosphate and acetaldehyde from 2-deoxy-alpha-D-ribose 1-phosphate: step 2/2. Functionally, catalyzes a reversible aldol reaction between acetaldehyde and D-glyceraldehyde 3-phosphate to generate 2-deoxy-D-ribose 5-phosphate. The polypeptide is Deoxyribose-phosphate aldolase (Streptococcus pyogenes serotype M28 (strain MGAS6180)).